The sequence spans 48 residues: Putative protein P' (48 aa).

The polypeptide is Putative protein P' (Bos taurus (Bovine)).